A 244-amino-acid chain; its full sequence is LexA repressor (244 aa).

The tract at residues 1-24 (MSDSSDTTVDGASDGASDGASGAD) is disordered. Over residues 10–24 (DGASDGASDGASGAD) the composition is skewed to low complexity. The segment at residues 58 to 78 (IREIGDAVGLTSTSSVAHQLR) is a DNA-binding region (H-T-H motif). Residues serine 168 and lysine 205 each act as for autocatalytic cleavage activity in the active site.

Belongs to the peptidase S24 family. As to quaternary structure, homodimer.

The enzyme catalyses Hydrolysis of Ala-|-Gly bond in repressor LexA.. Functionally, represses a number of genes involved in the response to DNA damage (SOS response), including recA and lexA. In the presence of single-stranded DNA, RecA interacts with LexA causing an autocatalytic cleavage which disrupts the DNA-binding part of LexA, leading to derepression of the SOS regulon and eventually DNA repair. This is LexA repressor from Mycobacterium ulcerans (strain Agy99).